Reading from the N-terminus, the 535-residue chain is Suppressor of cytokine signaling 6 (535 aa).

The span at 80 to 89 (RLSAKQKSKG) shows a compositional bias: basic residues. The disordered stretch occupies residues 80 to 105 (RLSAKQKSKGKAGTPSGSSADEDTFS). Positions 384–491 (WYWGPITRWE…TYPVRLTNPV (108 aa)) constitute an SH2 domain. One can recognise an SOCS box domain in the interval 486-535 (RLTNPVSRFMQVRSLQYLCRFVIRQYTRIDLIQKLPLPNKMKDYLQEKHY).

In terms of assembly, interacts with RBCK1. Interacts with phosphorylated IRS4. Interacts with KIT (phosphorylated). Interacts with PIM3.

Its pathway is protein modification; protein ubiquitination. In terms of biological role, SOCS family proteins form part of a classical negative feedback system that regulates cytokine signal transduction. May be a substrate recognition component of a SCF-like ECS (Elongin BC-CUL2/5-SOCS-box protein) E3 ubiquitin-protein ligase complex which mediates the ubiquitination and subsequent proteasomal degradation of target proteins. Regulates KIT degradation by ubiquitination of the tyrosine-phosphorylated receptor. This Pongo abelii (Sumatran orangutan) protein is Suppressor of cytokine signaling 6 (SOCS6).